Reading from the N-terminus, the 160-residue chain is Peripheral myelin protein 22 (160 aa).

A topological domain (cytoplasmic) is located at residue Met1. Residues 2–31 (LLLLLSIIVLHVAVLVLLFVSTIVSQWIVG) form a helical membrane-spanning segment. Residues 32 to 64 (NGHATDLWQNCSTSSSGNVHHCFSSSPNEWLQS) are Extracellular-facing. N-linked (GlcNAc...) asparagine glycosylation is present at Asn41. The chain crosses the membrane as a helical span at residues 65-91 (VQATMILSIIFSILSLFLFFCQLFTLT). Residues 92-95 (KGGR) lie on the Cytoplasmic side of the membrane. The chain crosses the membrane as a helical span at residues 96–119 (FYITGIFQILAGLCVMSAAAIYTV). The Extracellular portion of the chain corresponds to 120 to 133 (RHPEWHLNSDYSYG). Residues 134-156 (FAYILAWVAFPLALLSGVIYVIL) traverse the membrane as a helical segment. Residues 157 to 160 (RKRE) lie on the Cytoplasmic side of the membrane.

Belongs to the PMP-22/EMP/MP20 family. Post-translationally, ubiquitinated by the DCX(DCAF13) E3 ubiquitin ligase complex, leading to its degradation.

The protein localises to the cell membrane. Functionally, might be involved in growth regulation, and in myelinization in the peripheral nervous system. This Homo sapiens (Human) protein is Peripheral myelin protein 22 (PMP22).